Reading from the N-terminus, the 324-residue chain is Serine carboxypeptidase II-1 (324 aa).

Asparagine 10 carries N-linked (GlcNAc...) asparagine glycosylation. Residue serine 41 is part of the active site. 2 cysteine pairs are disulfide-bonded: cysteine 109–cysteine 121 and cysteine 145–cysteine 170. The propeptide at 150 to 162 (LHRRRLIKGRRPW) is linker peptide. A glycan (N-linked (GlcNAc...) asparagine) is linked at asparagine 191. Active-site residues include aspartate 239 and histidine 291.

This sequence belongs to the peptidase S10 family. In terms of assembly, carboxypeptidase II is a dimer, where each monomer is composed of two chains linked by a disulfide bond. Post-translationally, the linker peptide is endoproteolytically excised during enzyme maturation.

The catalysed reaction is Preferential release of a C-terminal arginine or lysine residue.. This is Serine carboxypeptidase II-1 (CXP;2-1) from Hordeum vulgare (Barley).